A 119-amino-acid chain; its full sequence is RIIa domain-containing protein 1 (119 aa).

One can recognise an RIIa domain in the interval K70–L104.

As to expression, abundant in tissues rich in highly ciliated cells, such as testis, trachea and olfactory epithelium.

The polypeptide is RIIa domain-containing protein 1 (Riiad1) (Mus musculus (Mouse)).